The primary structure comprises 255 residues: Pyrroloquinoline-quinone synthase (255 aa).

Belongs to the PqqC family.

The catalysed reaction is 6-(2-amino-2-carboxyethyl)-7,8-dioxo-1,2,3,4,7,8-hexahydroquinoline-2,4-dicarboxylate + 3 O2 = pyrroloquinoline quinone + 2 H2O2 + 2 H2O + H(+). Its pathway is cofactor biosynthesis; pyrroloquinoline quinone biosynthesis. In terms of biological role, ring cyclization and eight-electron oxidation of 3a-(2-amino-2-carboxyethyl)-4,5-dioxo-4,5,6,7,8,9-hexahydroquinoline-7,9-dicarboxylic-acid to PQQ. This Acinetobacter baylyi (strain ATCC 33305 / BD413 / ADP1) protein is Pyrroloquinoline-quinone synthase.